Here is a 451-residue protein sequence, read N- to C-terminus: Probable phosphoglucosamine mutase (451 aa).

Residue Ser-96 is the Phosphoserine intermediate of the active site. Ser-96, Asp-233, Asp-235, and Asp-237 together coordinate Mg(2+). Phosphoserine is present on Ser-96.

This sequence belongs to the phosphohexose mutase family. The cofactor is Mg(2+). In terms of processing, activated by phosphorylation.

The enzyme catalyses alpha-D-glucosamine 1-phosphate = D-glucosamine 6-phosphate. Functionally, catalyzes the conversion of glucosamine-6-phosphate to glucosamine-1-phosphate. In Pyrococcus abyssi (strain GE5 / Orsay), this protein is Probable phosphoglucosamine mutase.